Reading from the N-terminus, the 369-residue chain is Fructose-bisphosphate aldolase (369 aa).

Residue D40 participates in dihydroxyacetone phosphate binding. D-glyceraldehyde 3-phosphate is bound by residues S42 and T45. R49 lines the beta-D-fructose 1,6-bisphosphate pocket. K113 contributes to the D-glyceraldehyde 3-phosphate binding site. K152 is a dihydroxyacetone phosphate binding site. Position 195 (E195) interacts with D-glyceraldehyde 3-phosphate. E195 serves as the catalytic Proton acceptor. The dihydroxyacetone phosphate site is built by K237, S279, and G280. K237 (schiff-base intermediate with dihydroxyacetone phosphate) is an active-site residue. Beta-D-fructose 1,6-bisphosphate is bound by residues S279–G281 and S307. Dihydroxyacetone phosphate-binding residues include G309 and R310. R310 lines the beta-D-fructose 1,6-bisphosphate pocket.

This sequence belongs to the class I fructose-bisphosphate aldolase family. As to quaternary structure, homotetramer. Interacts with TRAP (via cytoplasmic domain); the interaction prevents substrate binding and thereby inhibits aldolase activity. Interacts with MTRAP (via cytoplasmic domain); MTRAP phosphorylation may increase the binding to FBPA. Interact with RH1 (via cytoplasmic domain). Interacts with RH2b (via cytoplasmic domain). Interacts with RH4 (via cytoplasmic domain). Interacts with AMA1 (via cytoplasmic domain); the interaction is weak, however it may be increased upon AMA1 phosphorylation. Interacts with EBA140 (via cytoplasmic domain); the interaction is weak. Interacts with EBA175 (via cytoplasmic domain); the interaction is weak. Interacts with EBA181 (via cytoplasmic domain); the interaction is weak. Interacts with G-actin and F-actin. May interact with ACT2/actin II; the interaction inhibits FBPA catalytic activity. Interacts with human SLC4A1/band 3 (via N-terminus); the interaction inhibits FBPA catalytic activity.

The protein resides in the cytoplasm. The protein localises to the membrane. Its subcellular location is the host cell membrane. It catalyses the reaction beta-D-fructose 1,6-bisphosphate = D-glyceraldehyde 3-phosphate + dihydroxyacetone phosphate. The protein operates within carbohydrate degradation; glycolysis; D-glyceraldehyde 3-phosphate and glycerone phosphate from D-glucose: step 4/4. With respect to regulation, the cytoplasmic tail of TRAP and probably other adhesins acts as a competitive inhibitor as the binding sites of the glycolytic substrate fructose 1,6-bisphosphate and TRAP partially overlap. Plays a key role in glycolysis by catalyzing the cleavage of fructose 1,6-bisphosphate into dihydroxyacetone phosphate and glyceraldehyde 3-phosphate. Independently of its catalytic activity, connects the actin filaments, and thus the actomyosin motor, to cell surface adhesins of the thrombospondin-related anonymous protein (TRAP), the erythrocyte binding ligand (EBL) and reticulocyte binding homolog (RH) protein families; this interaction is probably involved in transducing the motor force across the parasite surface required for sporozoite and ookinete gliding motility and merozoite invasion. Stimulates actin polymerisation. The polypeptide is Fructose-bisphosphate aldolase (Plasmodium falciparum (isolate 3D7)).